The sequence spans 286 residues: Formamidopyrimidine-DNA glycosylase (286 aa).

Catalysis depends on proline 2, which acts as the Schiff-base intermediate with DNA. Glutamate 3 functions as the Proton donor in the catalytic mechanism. Lysine 61 serves as the catalytic Proton donor; for beta-elimination activity. Positions 103, 122, and 164 each coordinate DNA. The FPG-type zinc-finger motif lies at 250-284 (NAYAQTGEPCGRCGTLIIRESFMNRGSHYCPNCQK). The active-site Proton donor; for delta-elimination activity is the arginine 274.

Belongs to the FPG family. Monomer. Zn(2+) is required as a cofactor.

The catalysed reaction is Hydrolysis of DNA containing ring-opened 7-methylguanine residues, releasing 2,6-diamino-4-hydroxy-5-(N-methyl)formamidopyrimidine.. The enzyme catalyses 2'-deoxyribonucleotide-(2'-deoxyribose 5'-phosphate)-2'-deoxyribonucleotide-DNA = a 3'-end 2'-deoxyribonucleotide-(2,3-dehydro-2,3-deoxyribose 5'-phosphate)-DNA + a 5'-end 5'-phospho-2'-deoxyribonucleoside-DNA + H(+). Its function is as follows. Involved in base excision repair of DNA damaged by oxidation or by mutagenic agents. Acts as a DNA glycosylase that recognizes and removes damaged bases. Has a preference for oxidized purines, such as 7,8-dihydro-8-oxoguanine (8-oxoG). Has AP (apurinic/apyrimidinic) lyase activity and introduces nicks in the DNA strand. Cleaves the DNA backbone by beta-delta elimination to generate a single-strand break at the site of the removed base with both 3'- and 5'-phosphates. This Corynebacterium glutamicum (strain ATCC 13032 / DSM 20300 / JCM 1318 / BCRC 11384 / CCUG 27702 / LMG 3730 / NBRC 12168 / NCIMB 10025 / NRRL B-2784 / 534) protein is Formamidopyrimidine-DNA glycosylase.